Here is a 125-residue protein sequence, read N- to C-terminus: Protein ApaG (125 aa).

The ApaG domain maps to 3 to 125; that stretch reads TAVTEGIEVT…FPLVVPGSLN (123 aa).

The chain is Protein ApaG from Anaeromyxobacter dehalogenans (strain 2CP-1 / ATCC BAA-258).